Here is a 360-residue protein sequence, read N- to C-terminus: Histidinol-phosphate aminotransferase (360 aa).

Lysine 221 carries the post-translational modification N6-(pyridoxal phosphate)lysine.

Belongs to the class-II pyridoxal-phosphate-dependent aminotransferase family. Histidinol-phosphate aminotransferase subfamily. Homodimer. It depends on pyridoxal 5'-phosphate as a cofactor.

The catalysed reaction is L-histidinol phosphate + 2-oxoglutarate = 3-(imidazol-4-yl)-2-oxopropyl phosphate + L-glutamate. The protein operates within amino-acid biosynthesis; L-histidine biosynthesis; L-histidine from 5-phospho-alpha-D-ribose 1-diphosphate: step 7/9. In Desulfitobacterium hafniense (strain DSM 10664 / DCB-2), this protein is Histidinol-phosphate aminotransferase.